An 89-amino-acid chain; its full sequence is Small ribosomal subunit protein bS20 (89 aa).

This sequence belongs to the bacterial ribosomal protein bS20 family.

In terms of biological role, binds directly to 16S ribosomal RNA. This Stenotrophomonas maltophilia (strain R551-3) protein is Small ribosomal subunit protein bS20.